The chain runs to 118 residues: Large ribosomal subunit protein bL20 (118 aa).

The protein belongs to the bacterial ribosomal protein bL20 family.

Functionally, binds directly to 23S ribosomal RNA and is necessary for the in vitro assembly process of the 50S ribosomal subunit. It is not involved in the protein synthesizing functions of that subunit. The chain is Large ribosomal subunit protein bL20 from Nostoc punctiforme (strain ATCC 29133 / PCC 73102).